Here is a 360-residue protein sequence, read N- to C-terminus: MPPTAVTEATAVPGSNVTTKDPAKDTILTPRFYTTDFEAMAAMDLRPNEAELEAICEEFRKDYNRHHFVRNGEFDGAADQLDPETRKVFVEFLEQSCTSEFSGFLLYKELSRRIKTKNPLLAECFSHMARDEARHAGFLNKSMSDFGLQLDLGFLTSSKSYTFFKPKFIFYATYLSEKIGYWRYITIFRHLEQNPDSKIFPIFNFFENWCQDENRHGDFFDALMKAQPETVRGLRARLWCRFFLLAVFATMYVRDVARKEFYEALGLDAREYDRLVIDKTNENTARVFPVVLDVKNPRFYNGLERLVNNNAALSAVDATQAPAPIKLLRKLPHWVANGAQMASLFLMAPIRSDRYHPSVR.

The segment at methionine 1 to aspartate 21 is disordered.

It belongs to the AcsF family. Fe cation is required as a cofactor.

The catalysed reaction is Mg-protoporphyrin IX 13-monomethyl ester + 3 NADPH + 3 O2 + 2 H(+) = 3,8-divinyl protochlorophyllide a + 3 NADP(+) + 5 H2O. It participates in porphyrin-containing compound metabolism; chlorophyll biosynthesis (light-independent). In terms of biological role, catalyzes the formation of the isocyclic ring in chlorophyll biosynthesis. Mediates the cyclase reaction, which results in the formation of divinylprotochlorophyllide (Pchlide) characteristic of all chlorophylls from magnesium-protoporphyrin IX 13-monomethyl ester (MgPMME). This Synechococcus sp. (strain CC9311) protein is Magnesium-protoporphyrin IX monomethyl ester [oxidative] cyclase.